The chain runs to 117 residues: Ribonuclease P protein component (117 aa).

The protein belongs to the RnpA family. As to quaternary structure, consists of a catalytic RNA component (M1 or rnpB) and a protein subunit.

The enzyme catalyses Endonucleolytic cleavage of RNA, removing 5'-extranucleotides from tRNA precursor.. Functionally, RNaseP catalyzes the removal of the 5'-leader sequence from pre-tRNA to produce the mature 5'-terminus. It can also cleave other RNA substrates such as 4.5S RNA. The protein component plays an auxiliary but essential role in vivo by binding to the 5'-leader sequence and broadening the substrate specificity of the ribozyme. The polypeptide is Ribonuclease P protein component (Thermotoga petrophila (strain ATCC BAA-488 / DSM 13995 / JCM 10881 / RKU-1)).